Reading from the N-terminus, the 351-residue chain is L-threonine 3-dehydrogenase (351 aa).

Zn(2+) is bound at residue Cys39. Catalysis depends on charge relay system residues Thr41 and His44. Residues His64, Glu65, Cys94, Cys97, Cys100, and Cys108 each contribute to the Zn(2+) site. NAD(+)-binding positions include Ile176, Asp196, Arg201, 271-273 (LGI), and 295-296 (IY).

This sequence belongs to the zinc-containing alcohol dehydrogenase family. In terms of assembly, homotetramer. It depends on Zn(2+) as a cofactor.

Its subcellular location is the cytoplasm. The enzyme catalyses L-threonine + NAD(+) = (2S)-2-amino-3-oxobutanoate + NADH + H(+). The protein operates within amino-acid degradation; L-threonine degradation via oxydo-reductase pathway; glycine from L-threonine: step 1/2. In terms of biological role, catalyzes the NAD(+)-dependent oxidation of L-threonine to 2-amino-3-ketobutyrate. The sequence is that of L-threonine 3-dehydrogenase from Francisella tularensis subsp. tularensis (strain SCHU S4 / Schu 4).